A 222-amino-acid chain; its full sequence is V-type ATP synthase subunit D (222 aa).

The protein belongs to the V-ATPase D subunit family.

Its function is as follows. Produces ATP from ADP in the presence of a proton gradient across the membrane. This is V-type ATP synthase subunit D from Acetivibrio thermocellus (strain ATCC 27405 / DSM 1237 / JCM 9322 / NBRC 103400 / NCIMB 10682 / NRRL B-4536 / VPI 7372) (Clostridium thermocellum).